The sequence spans 290 residues: Ribosomal RNA small subunit methyltransferase A (290 aa).

Residues N27, L29, G54, E75, D100, and N125 each coordinate S-adenosyl-L-methionine.

It belongs to the class I-like SAM-binding methyltransferase superfamily. rRNA adenine N(6)-methyltransferase family. RsmA subfamily.

It is found in the cytoplasm. It catalyses the reaction adenosine(1518)/adenosine(1519) in 16S rRNA + 4 S-adenosyl-L-methionine = N(6)-dimethyladenosine(1518)/N(6)-dimethyladenosine(1519) in 16S rRNA + 4 S-adenosyl-L-homocysteine + 4 H(+). Specifically dimethylates two adjacent adenosines (A1518 and A1519) in the loop of a conserved hairpin near the 3'-end of 16S rRNA in the 30S particle. May play a critical role in biogenesis of 30S subunits. This chain is Ribosomal RNA small subunit methyltransferase A, found in Streptococcus pyogenes serotype M18 (strain MGAS8232).